We begin with the raw amino-acid sequence, 834 residues long: MAP kinase phosphatase with leucine-rich repeats protein 1 (834 aa).

A disordered region spans residues 1-103; sequence MIFKKLFSKG…GSGTTKESKK (103 aa). Residues 36–78 are compositionally biased toward low complexity; that stretch reads GSGTNTNGLSNSTTNPSSIHSTPTTPTTTASTNLTNSNKLSTL. The segment covering 79 to 98 has biased composition (polar residues); that stretch reads APITNGNRSLRGSKDGSGTT. LRR repeat units follow at residues 160–181, 183–204, 206–226, 229–251, 252–273, 274–292, 298–319, 321–342, 345–366, and 368–389; these read ELRS…IGLL, NLKH…LSQL, SLES…NICK, SLTL…INLE, NLKD…LPNN, IEKL…SKSL, SLTT…LSCL, NVKT…VLGS, SLVT…IVTL, and NLRI…PSSE. A disordered region spans residues 503-584; the sequence is YEKQENDENN…ENPLKESQGK (82 aa). The span at 511 to 536 shows a compositional bias: polar residues; that stretch reads NNSVTLETTTTISIASDNTDEASIQI. Basic and acidic residues-rich tracts occupy residues 538–554 and 569–582; these read QKED…DKLL and KQQE…KESQ. A coiled-coil region spans residues 555 to 615; sequence QESFSENNNN…IRLEKIKYQE (61 aa). Positions 695–834 constitute a Tyrosine-protein phosphatase domain; sequence VPDLIIDKLY…LKKFEKDLSK (140 aa). The Phosphocysteine intermediate role is filled by cysteine 778.

It belongs to the protein-tyrosine phosphatase family. Non-receptor class dual specificity subfamily.

It carries out the reaction O-phospho-L-tyrosyl-[protein] + H2O = L-tyrosyl-[protein] + phosphate. The enzyme catalyses O-phospho-L-seryl-[protein] + H2O = L-seryl-[protein] + phosphate. The catalysed reaction is O-phospho-L-threonyl-[protein] + H2O = L-threonyl-[protein] + phosphate. Its function is as follows. Probable phosphatase with dual specificity toward Ser/Thr and Tyr-containing proteins. Dephosphorylates pNPP, in vitro. Essential for proper regulation of erkB (erk2) and optimal motility during development. This chain is MAP kinase phosphatase with leucine-rich repeats protein 1 (mpl1), found in Dictyostelium discoideum (Social amoeba).